The following is a 525-amino-acid chain: Cyclic AMP-responsive element-binding protein 3-like protein 2 (525 aa).

Residues 1–382 (MEIMESGDPV…SCKAAGTQTG (382 aa)) lie on the Cytoplasmic side of the membrane. 3 disordered regions span residues 85-104 (LCGDSRPQSPFTHASSDDNF), 203-267 (EALQ…QGSG), and 309-338 (NKISAQESRRKKKEYMDSLEKRVENSSSEN). Composition is skewed to polar residues over residues 90-102 (RPQSPFTHASSDD) and 213-239 (SSHGSDSEGGQSPTRSLPPSSPVQSQA). Residues 299–362 (ALKKIRRKIK…RTLLQQLQRL (64 aa)) enclose the bZIP domain. Positions 301-330 (KKIRRKIKNKISAQESRRKKKEYMDSLEKR) are basic motif. Residues 322-332 (EYMDSLEKRVE) are compositionally biased toward basic and acidic residues. Residues 341 to 362 (LRKKVEVLESTNRTLLQQLQRL) form a leucine-zipper region. The helical; Signal-anchor for type II membrane protein transmembrane segment at 383-403 (TCLMMVVLCFAVIFGSFTQNL) threads the bilayer. Topologically, residues 404–525 (DMYSSSSKTI…ELDRTVNTTS (122 aa)) are lumenal. Positions 433–436 (RKLL) match the S1P recognition motif. N490, N509, and N522 each carry an N-linked (GlcNAc...) asparagine glycan.

Belongs to the bZIP family. ATF subfamily. Binds DNA as a dimer. Upon ER stress, translocated to the Golgi apparatus, where it is processed by regulated intramembrane proteolysis (RIP) to release the cytosol-facing N-terminal transcription factor domain. The cleavage is performed sequentially by site-1 and site-2 proteases (S1P/mbtps1 and S2P/mbtps2).

The protein resides in the endoplasmic reticulum membrane. It localises to the nucleus. In terms of biological role, transcription factor involved in unfolded protein response (UPR). In the absence of endoplasmic reticulum (ER) stress, inserted into ER membranes, with N-terminal DNA-binding and transcription activation domains oriented toward the cytosolic face of the membrane. In response to ER stress, transported to the Golgi, where it is cleaved in a site-specific manner by resident proteases S1P/mbtps1 and S2P/mbtps2. The released N-terminal cytosolic domain is translocated to the nucleus to effect transcription of specific target genes. Plays a critical role in chondrogenesis. May protect neuroblastoma cells from ER stress-induced death. In vitro activates transcription of target genes via direct binding to the CRE site. The chain is Cyclic AMP-responsive element-binding protein 3-like protein 2 (creb3l2) from Xenopus laevis (African clawed frog).